We begin with the raw amino-acid sequence, 222 residues long: N-(5'-phosphoribosyl)anthranilate isomerase (222 aa).

It belongs to the TrpF family.

It catalyses the reaction N-(5-phospho-beta-D-ribosyl)anthranilate = 1-(2-carboxyphenylamino)-1-deoxy-D-ribulose 5-phosphate. The protein operates within amino-acid biosynthesis; L-tryptophan biosynthesis; L-tryptophan from chorismate: step 3/5. The protein is N-(5'-phosphoribosyl)anthranilate isomerase of Xanthomonas oryzae pv. oryzae (strain PXO99A).